The following is a 436-amino-acid chain: MKPLIALVGRPNVGKSTLFNRILRERAAIVDSTPGVTRDRHISEGFWQGRAFRLMDTGGYAPEDGVISNAMLEQTMTAINDADIVVFVADARAGLSYDDLELAKVLRQRFSHKPVFFAVNKVESPQLAYEAASFVSTGYTEPWCISAKDGSGVADLLDAILLEMPESDADQEEDGAIRLAVVGRPNVGKSSFVNALLGNNRQIVSDIPGTTRDAIDTRFTRNQQDFLLIDTAGLRKRTKISAGIEYYSSLRSEKAIERCEVVMVMIDAGPGIEKQDLKIINMATERKRAVLLLVNKWDLIEKDSKTSKQYEDTLRSHMGNLAYVPVLFISALTKKNLYRAIDTAREIRDNRARKISTSALNRFLEEALAANPPSSKGGTELKIKYMTQIQAAWPVFAFFCNNPELVQTNFRKFLENRLREKFDLKGVTISLRFLQK.

2 EngA-type G domains span residues 3–168 (PLIA…PESD) and 177–352 (IRLA…DNRA). Residues 9 to 16 (GRPNVGKS), 56 to 60 (DTGGY), 120 to 123 (NKVE), 183 to 190 (GRPNVGKS), 230 to 234 (DTAGL), and 295 to 298 (NKWD) each bind GTP. In terms of domain architecture, KH-like spans 353–436 (RKISTSALNR…VTISLRFLQK (84 aa)).

The protein belongs to the TRAFAC class TrmE-Era-EngA-EngB-Septin-like GTPase superfamily. EngA (Der) GTPase family. Associates with the 50S ribosomal subunit.

GTPase that plays an essential role in the late steps of ribosome biogenesis. This is GTPase Der from Chlorobium phaeovibrioides (strain DSM 265 / 1930) (Prosthecochloris vibrioformis (strain DSM 265)).